Here is an 867-residue protein sequence, read N- to C-terminus: Protein argonaute-3 (867 aa).

Positions 1-83 are necessary and sufficient for interaction with krimp; it reads MSGRGNLLSL…IDTLKTDDHT (83 aa). An interaction with papi region spans residues 1–289; it reads MSGRGNLLSL…CDVSHRILCQ (289 aa). Symmetric dimethylarginine is present on residues arginine 4, arginine 68, and arginine 70. The PAZ domain occupies 291 to 402; the sequence is TVLEMLVDLY…LIPELCYLTG (112 aa). Residues 566–853 enclose the Piwi domain; it reads MVVCICHNRR…LAYLIGQSIQ (288 aa).

Belongs to the argonaute family. Piwi subfamily. Component of the ping-pong piRNA processing (4P) complex consisting of krimp, aub and AGO3. Interacts (via N-terminus when not methylated on arginine residues) with krimp (via non-canonical tudor domain); this interaction leads to symmetrical dimethylation on AGO3 arginine residues and its subsequent dissociation from krimp. Krimp associated AGO3 is mostly free of piRNA binding and the interaction plays an important role in the loading of AGO3 with piRNAs; piRNA binding may stimulate dissociation of the two proteins. May form part of a piRNA processing complex consisting of tud, aub and AGO3. Interacts (when symmetrically dimethylated on arginine residues) with tud. Forms a complex with smg, twin, aub, nos mRNA and piRNAs that target the nos 3'-untranslated region, in early embryos. Interacts (via the N-terminal region when symmetrically methylated on arginine residues) with papi (via C-terminus); this interaction is RNA-independent and may be required for AGO3 localization to the nuage. Interacts with TER94 and tral. Post-translationally, symmetrically dimethylated on Arg-4, Arg-68 and Arg-70, most likely by csul/PRMT5/DART5. Methylation state probably functions as an indicator of its piRNA binding state. In ovary, expressed in germline stem cells, germline cyst cells, nurse cells and oocytes during early stages. Also found in the somatic cap cells of the germarium. In testis, expressed in germline stem cells, primary gonial cells and early spermatocytes. No expression detected in the somatic hub cells at the apical tip of the testis (at protein level). Expressed in neurons throughout the adult brain and in the mushroom body subdivision in the peduncle. In the mushroom body, expressed only in gamma and core alpha-beta neurons.

It localises to the cytoplasm. Its subcellular location is the perinuclear region. It is found in the cytoplasmic ribonucleoprotein granule. Functionally, component of the perinuclear meiotic nuage, a germline-specific subcellular membraneless ribonucleoprotein compartment involved in production of transposable element-repressing Piwi-interacting RNA (piRNA)-induced silencing complexes (piRISCs), which are essential for maintaining germline integrity during oogenesis. Acts via the Piwi-interacting RNA (piRNA) metabolic process, which mediates the repression of transposable elements during meiosis by forming complexes composed of piRNAs and Piwi proteins and governs the methylation and subsequent repression of transposons. Piwi protein that directly binds piRNAs, a class of 24 to 30 nucleotide RNAs that are generated by a Dicer-independent mechanism and are primarily derived from transposons and other repeated sequence elements. Associates predominantly with sense piRNAs that contain adenine at nucleotide 10, but shows no preference for uridine at the 5' end. Shows RNA cleavage or slicer activity. Together with Piwi protein aub recruited to subregions of the perinuclear nuage by krimp, which coordinates their activity in the ping-pong amplification step of secondary piRNA biogenesis. Krimp recruits piRNA bound aub and unbound AGO3, bringing them into close proximity to facilitate the loading onto AGO3 of freshly cut piRNAs generated by aub cleavage of target sequences; krimp recognizes the piRNA loading state of the Piwi proteins via symmetrically dimethylated arginine modification in their N-terminus. Important for asymmetric ping-pong amplification to bias production towards antisense piRNAs capable of silencing transposable elements. In testis, associates with Su(Ste) and AT-chX-1 piRNAs mostly produced from antisense precursors. In the germline, acts to amplify pools of antisense piRNAs, among others Su(Ste), AT-chX-1 and roo, and to limit sense piRNA accumulation. Forms a complex with smg, twin, aub and specific piRNAs that targets nos mRNA (and probably other maternal mRNAS) for deadenylation promoting its decay during early embryogenesis. Involved in transposon silencing in the adult brain. The protein is Protein argonaute-3 of Drosophila melanogaster (Fruit fly).